A 154-amino-acid polypeptide reads, in one-letter code: Cindoxin (154 aa).

Residues 3-145 form the Flavodoxin-like domain; it reads ALILYGTETG…TAEEWAREIL (143 aa). FMN-binding positions include 9–13 and 89–120; these read TETGN and VFGLGDSYYTTFNQAGATAATILASLGGTQVG.

FMN is required as a cofactor.

Functionally, involved in the degradation of cineol (eucalyptol). The FMN protein, cindoxin, shuttles electrons between the FAD-containing cindoxin reductase (CinB) and 1,8-cineole 2-endo-monooxygenase (CinA). The sequence is that of Cindoxin (cinC) from Citrobacter braakii.